The chain runs to 243 residues: UDP-2,3-diacylglucosamine hydrolase (243 aa).

5 residues coordinate Mn(2+): Asp-8, His-10, Asp-41, Asn-79, and His-114. A substrate-binding site is contributed by 79–80 (NR). Substrate-binding residues include Asp-122, Lys-164, Lys-167, and His-195. Mn(2+)-binding residues include His-195 and His-197.

This sequence belongs to the LpxH family. It depends on Mn(2+) as a cofactor.

It localises to the cell inner membrane. The catalysed reaction is UDP-2-N,3-O-bis[(3R)-3-hydroxytetradecanoyl]-alpha-D-glucosamine + H2O = 2-N,3-O-bis[(3R)-3-hydroxytetradecanoyl]-alpha-D-glucosaminyl 1-phosphate + UMP + 2 H(+). It functions in the pathway glycolipid biosynthesis; lipid IV(A) biosynthesis; lipid IV(A) from (3R)-3-hydroxytetradecanoyl-[acyl-carrier-protein] and UDP-N-acetyl-alpha-D-glucosamine: step 4/6. In terms of biological role, hydrolyzes the pyrophosphate bond of UDP-2,3-diacylglucosamine to yield 2,3-diacylglucosamine 1-phosphate (lipid X) and UMP by catalyzing the attack of water at the alpha-P atom. Involved in the biosynthesis of lipid A, a phosphorylated glycolipid that anchors the lipopolysaccharide to the outer membrane of the cell. This is UDP-2,3-diacylglucosamine hydrolase from Vibrio vulnificus (strain YJ016).